We begin with the raw amino-acid sequence, 252 residues long: Probable endonuclease 4 (252 aa).

Histidine 56, histidine 96, glutamate 129, aspartate 162, histidine 165, histidine 191, aspartate 204, histidine 206, and glutamate 233 together coordinate Zn(2+).

Belongs to the AP endonuclease 2 family. It depends on Zn(2+) as a cofactor.

The enzyme catalyses Endonucleolytic cleavage to 5'-phosphooligonucleotide end-products.. Its function is as follows. Endonuclease IV plays a role in DNA repair. It cleaves phosphodiester bonds at apurinic or apyrimidinic (AP) sites, generating a 3'-hydroxyl group and a 5'-terminal sugar phosphate. This is Probable endonuclease 4 from Mycobacterium tuberculosis (strain ATCC 25177 / H37Ra).